Reading from the N-terminus, the 1163-residue chain is MNREDRNVLRMKERERRNQEIQQGEDAFPPSSPLFAEPYKVTSKEDKLSSRIQSMLGNYDEMKDFIGDRSIPKLVAIPKPTVPPSADEKSNPNFFEQRHGGSHQSSKWTPVGPAPSTSQSQKRSSGLQSGHSSQRTSAGSSSGTNSSGQRHDRESYNNSGSSSRKKGQHGSEHSKSRSSSPGKPQAVSSLNSSHSRSHGNDHHSKEHQRSKSPRDPDANWDSPSRVPFSSGQHSTQSFPPSLMSKSNSMLQKPTAYVRPMDGQESMEPKLSSEHYSSQSHGNSMTELKPSSKAHLTKLKIPSQPLDASASGDVSCVDEILKEMTHSWPPPLTAIHTPCKTEPSKFPFPTKESQQSNFGTGEQKRYNPSKTSNGHQSKSMLKDDLKLSSSEDSDGEQDCDKTMPRSTPGSNSEPSHHNSEGADNSRDDSSSHSGSESSSGSDSESESSSSDSEANEPSQSASPEPEPPPTNKWQLDNWLNKVNPHKVSPASSVDSNIPSSQGYKKEGREQGTGNSYTDTSGPKETSSATPGRDSKTIQKGSESGRGRQKSPAQSDSTTQRRTVGKKQPKKAEKAAAEEPRGGLKIESETPVDLASSMPSSRHKAATKGSRKPNIKKESKSSPRPTAEKKKYKSTSKSSQKSREIIETDTSSSDSDESESLPPSSQTPKYPESNRTPVKPSSVEEEDSFFRQRMFSPMEEKELLSPLSEPDDRYPLIVKIDLNLLTRIPGKPYKETEPPKGEKKNVPEKHTREAQKQASEKVSNKGKRKHKNEDDNRASESKKPKTEDKNSAGHKPSSNRESSKQSAAKEKDLLPSPAGPVPSKDPKTEHGSRKRTISQSSSLKSSSNSNKETSGSSKNSSSTSKQKKTEGKTSSSSKEVKEKAPSSSSNCPPSAPTLDSSKPRRTKLVFDDRNYSADHYLQEAKKLKHNADALSDRFEKAVYYLDAVVSFIECGNALEKNAQESKSPFPMYSETVDLIKYTMKLKNYLAPDATAADKRLTVLCLRCESLLYLRLFKLKKENALKYSKTLTEHLKNSYNNSQAPSPGLGSKAVGMPSPVSPKLSPGNSGNYSSGASSASASGSSVTIPQKIHQMAASYVQVTSNFLYATEIWDQAEQLSKEQKEFFAELDKVMGPLIFNASIMTDLVRYTRQGLHWLRQDAKLIS.

Over residues methionine 1–glutamine 19 the composition is skewed to basic and acidic residues. Disordered regions lie at residues methionine 1–leucine 48, alanine 76–aspartate 312, threonine 324–threonine 904, and asparagine 1034–alanine 1073. The span at proline 115 to glutamine 128 shows a compositional bias: polar residues. The residue at position 120 (serine 120) is a Phosphoserine. 2 stretches are compositionally biased toward low complexity: residues serine 129 to glycine 148 and arginine 177 to histidine 194. Basic and acidic residues predominate over residues histidine 198–aspartate 217. Phosphoserine is present on serine 212. 3 stretches are compositionally biased toward polar residues: residues proline 227–glutamine 251, glutamate 273–threonine 285, and lysine 350–glutamine 375. A phosphoserine mark is found at serine 387, serine 388, serine 389, and serine 392. Over residues proline 403–glutamate 412 the composition is skewed to polar residues. A compositionally biased stretch (basic and acidic residues) spans proline 413–serine 429. Residues serine 430 to proline 462 show a composition bias toward low complexity. 3 positions are modified to phosphoserine: serine 487, serine 490, and serine 491. 3 stretches are compositionally biased toward polar residues: residues proline 488–glycine 501, glycine 510–threonine 528, and serine 549–arginine 560. Serine 549 carries the phosphoserine modification. The span at lysine 568–serine 586 shows a compositional bias: basic and acidic residues. A Glycyl lysine isopeptide (Lys-Gly) (interchain with G-Cter in SUMO2) cross-link involves residue lysine 583. Residues serine 599 to asparagine 612 are compositionally biased toward basic residues. Residues isoleucine 613–lysine 627 are compositionally biased toward basic and acidic residues. At serine 671 the chain carries Phosphoserine. Threonine 674 carries the post-translational modification Phosphothreonine. A phosphoserine mark is found at serine 680, serine 694, serine 703, and serine 706. Position 712 is a phosphotyrosine (tyrosine 712). 3 stretches are compositionally biased toward basic and acidic residues: residues proline 730–serine 761, lysine 769–serine 789, and glutamate 799–leucine 811. A Phosphoserine modification is found at serine 814. At lysine 822 the chain carries N6-acetyllysine. Phosphoserine occurs at positions 836, 1043, 1055, 1058, and 1062. Residues serine 836 to serine 862 are compositionally biased toward low complexity. Residues serine 1062–alanine 1073 show a composition bias toward low complexity.

This sequence belongs to the AF4 family. As to quaternary structure, component of the super elongation complex (SEC), at least composed of EAF1, EAF2, CDK9, MLLT3/AF9, AFF (AFF1 or AFF4), the P-TEFb complex and ELL (ELL, ELL2 or ELL3). Interacts with ELL3; the interaction is direct. Interacts with ELL2; the interaction is direct and leads to stabilize ELL2 and prevent ELL2 ubiquitination and degradation. Dephosphorylated at Ser-549 by the PNUTS-PP1 complex, promoting RNA polymerase II transcription pause-release. In terms of tissue distribution, ubiquitously expressed. Strongly expressed in heart, placenta, skeletal muscle, pancreas and to a lower extent in brain.

The protein resides in the nucleus. It is found in the chromosome. Functionally, key component of the super elongation complex (SEC), a complex required to increase the catalytic rate of RNA polymerase II transcription by suppressing transient pausing by the polymerase at multiple sites along the DNA. In the SEC complex, AFF4 acts as a central scaffold that recruits other factors through direct interactions with ELL proteins (ELL, ELL2 or ELL3) and the P-TEFb complex. In case of infection by HIV-1 virus, the SEC complex is recruited by the viral Tat protein to stimulate viral gene expression. The polypeptide is AF4/FMR2 family member 4 (AFF4) (Homo sapiens (Human)).